Here is a 239-residue protein sequence, read N- to C-terminus: Ribonuclease PH (239 aa).

Phosphate-binding positions include R87 and 125 to 127 (GTR).

This sequence belongs to the RNase PH family. Homohexameric ring arranged as a trimer of dimers.

It catalyses the reaction tRNA(n+1) + phosphate = tRNA(n) + a ribonucleoside 5'-diphosphate. Phosphorolytic 3'-5' exoribonuclease that plays an important role in tRNA 3'-end maturation. Removes nucleotide residues following the 3'-CCA terminus of tRNAs; can also add nucleotides to the ends of RNA molecules by using nucleoside diphosphates as substrates, but this may not be physiologically important. Probably plays a role in initiation of 16S rRNA degradation (leading to ribosome degradation) during starvation. The sequence is that of Ribonuclease PH from Ectopseudomonas mendocina (strain ymp) (Pseudomonas mendocina).